A 410-amino-acid chain; its full sequence is Lissencephaly-1 homolog A (410 aa).

A LisH domain is found at 7–39; the sequence is QRDELNRAIADYLRSNGYEEAYSTFKKEAELDM. Residues 56-82 adopt a coiled-coil conformation; it reads TSVIRLQKKVMELESKLNEAKEEITLG. 7 WD repeats span residues 106–147, 148–187, 190–229, 232–271, 274–333, 336–375, and 378–410; these read GHRS…RTLK, GHTD…CIRT, GHDH…CVKT, GHRE…CKAE, EHEH…CLMT, GHDN…CMKT, and AHEH…WECR.

Belongs to the WD repeat LIS1/nudF family. As to quaternary structure, can self-associate. Component of the cytosolic PAF-AH (I) heterotetrameric enzyme, which is composed of PAFAH1B1 (beta), PAFAH1B2 (alpha2) and PAFAH1B3 (alpha1) subunits. The catalytic activity of the enzyme resides in the alpha1 (PAFAH1B3) and alpha2 (PAFAH1B2) subunits, whereas the beta subunit (PAFAH1B1) has regulatory activity. Trimer formation is not essential for the catalytic activity. Interacts with dynein, dynactin, nde1 and ndel1.

It localises to the cytoplasm. Its subcellular location is the cytoskeleton. The protein localises to the microtubule organizing center. The protein resides in the centrosome. Regulatory subunit (beta subunit) of the cytosolic type I platelet-activating factor (PAF) acetylhydrolase (PAF-AH (I)), an enzyme that catalyzes the hydrolyze of the acetyl group at the sn-2 position of PAF and its analogs and participates in PAF inactivation. Regulates the PAF-AH (I) activity in a catalytic dimer composition-dependent manner. Positively regulates the activity of the minus-end directed microtubule motor protein dynein. May enhance dynein-mediated microtubule sliding by targeting dynein to the microtubule plus end. Required for several dynein- and microtubule-dependent processes such as the maintenance of Golgi integrity, the peripheral transport of microtubule fragments and the coupling of the nucleus and centrosome. May be required for proliferation of neuronal precursors and neuronal migration. The chain is Lissencephaly-1 homolog A (pafah1b1-1) from Salmo salar (Atlantic salmon).